A 277-amino-acid chain; its full sequence is NLP effector protein Pc109174 (277 aa).

The first 19 residues, 1 to 19, serve as a signal peptide directing secretion; that stretch reads MNLVPALVLLLALAQTVLG. Residues 119-125 carry the Hepta-peptide GHRHDWE motif motif; that stretch reads KSRHLWA. Residue asparagine 199 is glycosylated (N-linked (GlcNAc...) asparagine).

This sequence belongs to the Necrosis inducing protein (NPP1) family.

It localises to the secreted. Its function is as follows. Secreted effector that contributes strongly to virulence during infection by P.capsici. Induces cell death in the Solanaceae, including hot pepper. This is NLP effector protein Pc109174 from Phytophthora capsici.